Here is a 626-residue protein sequence, read N- to C-terminus: Serine/threonine-protein kinase PknH (626 aa).

Residues 1–403 (MSDAQDSRVG…QTPRKTNPWP (403 aa)) are Cytoplasmic-facing. The region spanning 16 to 276 (YHLKRLLGRG…DLALAAHEAL (261 aa)) is the Protein kinase domain. ATP is bound by residues 22-30 (LGRGGMGEV) and Lys-45. Catalysis depends on Asp-139, which acts as the Proton acceptor. Residue Thr-170 is modified to Phosphothreonine. The interval 292-396 (QESTLPAPPK…GGPSPWAQTP (105 aa)) is disordered. Composition is skewed to pro residues over residues 297–308 (PAPPKPVPPPTM) and 316–342 (RQPP…PAQP). Over residues 343 to 355 (GPAGQRPGPTGQP) the composition is skewed to low complexity. A helical membrane pass occupies residues 404–424 (LVAGAAAVVLVLVLGAIGIWI). Topologically, residues 425–626 (AIRPKPVQPP…AKIVDKVNKE (202 aa)) are extracellular. 2 disulfides stabilise this stretch: Cys-482-Cys-545 and Cys-587-Cys-604.

Belongs to the protein kinase superfamily. Ser/Thr protein kinase family. The cofactor is a divalent metal cation. In terms of processing, autophosphorylated on threonine and serine residues. Dephosphorylated by PstP.

Its subcellular location is the cell membrane. It carries out the reaction L-seryl-[protein] + ATP = O-phospho-L-seryl-[protein] + ADP + H(+). The enzyme catalyses L-threonyl-[protein] + ATP = O-phospho-L-threonyl-[protein] + ADP + H(+). Inhibited by the kinase inhibitors staurosporine and H-7. Functionally, may regulate bacterial growth in response to external signals to facilitate adaptation to the host environment. In vitro, phosphorylates several substrates such as EmbR, DevR (DosR), DacB1 and Rv0681. This Mycobacterium tuberculosis (strain ATCC 25618 / H37Rv) protein is Serine/threonine-protein kinase PknH (pknH).